The following is a 185-amino-acid chain: Protein GrpE (185 aa).

A disordered region spans residues 1–37; the sequence is MEEQEEKQYNQNIQDNEEGTQMREELQESTSAQQTLQ. The span at 28–37 shows a compositional bias: polar residues; that stretch reads ESTSAQQTLQ.

The protein belongs to the GrpE family. Homodimer.

It is found in the cytoplasm. Its function is as follows. Participates actively in the response to hyperosmotic and heat shock by preventing the aggregation of stress-denatured proteins, in association with DnaK and GrpE. It is the nucleotide exchange factor for DnaK and may function as a thermosensor. Unfolded proteins bind initially to DnaJ; upon interaction with the DnaJ-bound protein, DnaK hydrolyzes its bound ATP, resulting in the formation of a stable complex. GrpE releases ADP from DnaK; ATP binding to DnaK triggers the release of the substrate protein, thus completing the reaction cycle. Several rounds of ATP-dependent interactions between DnaJ, DnaK and GrpE are required for fully efficient folding. In Helicobacter hepaticus (strain ATCC 51449 / 3B1), this protein is Protein GrpE.